The primary structure comprises 110 residues: Large ribosomal subunit protein uL22 (110 aa).

It belongs to the universal ribosomal protein uL22 family. Part of the 50S ribosomal subunit.

Its function is as follows. This protein binds specifically to 23S rRNA; its binding is stimulated by other ribosomal proteins, e.g. L4, L17, and L20. It is important during the early stages of 50S assembly. It makes multiple contacts with different domains of the 23S rRNA in the assembled 50S subunit and ribosome. The globular domain of the protein is located near the polypeptide exit tunnel on the outside of the subunit, while an extended beta-hairpin is found that lines the wall of the exit tunnel in the center of the 70S ribosome. This is Large ribosomal subunit protein uL22 from Shewanella loihica (strain ATCC BAA-1088 / PV-4).